The primary structure comprises 574 residues: Acetolactate synthase large subunit (574 aa).

Glu-51 serves as a coordination point for thiamine diphosphate. Residues Arg-153, 261-282, and 304-323 each bind FAD; these read HGTY…IGVR and DIDP…IVGN. Positions 397–477 are thiamine pyrophosphate binding; that stretch reads QHQMFAALYY…ILILNLNNKS (81 aa). Positions 448 and 475 each coordinate Mg(2+).

Belongs to the TPP enzyme family. As to quaternary structure, dimer of large and small chains. It depends on Mg(2+) as a cofactor. Thiamine diphosphate is required as a cofactor.

The enzyme catalyses 2 pyruvate + H(+) = (2S)-2-acetolactate + CO2. Its pathway is amino-acid biosynthesis; L-isoleucine biosynthesis; L-isoleucine from 2-oxobutanoate: step 1/4. It functions in the pathway amino-acid biosynthesis; L-valine biosynthesis; L-valine from pyruvate: step 1/4. This chain is Acetolactate synthase large subunit (ilvI), found in Buchnera aphidicola subsp. Schlechtendalia chinensis.